Here is a 177-residue protein sequence, read N- to C-terminus: Large ribosomal subunit protein uL6 (177 aa).

This sequence belongs to the universal ribosomal protein uL6 family. As to quaternary structure, part of the 50S ribosomal subunit.

This protein binds to the 23S rRNA, and is important in its secondary structure. It is located near the subunit interface in the base of the L7/L12 stalk, and near the tRNA binding site of the peptidyltransferase center. This Pseudomonas paraeruginosa (strain DSM 24068 / PA7) (Pseudomonas aeruginosa (strain PA7)) protein is Large ribosomal subunit protein uL6.